The sequence spans 84 residues: Small ribosomal subunit protein bS18 (84 aa).

Belongs to the bacterial ribosomal protein bS18 family. Part of the 30S ribosomal subunit. Forms a tight heterodimer with protein bS6.

In terms of biological role, binds as a heterodimer with protein bS6 to the central domain of the 16S rRNA, where it helps stabilize the platform of the 30S subunit. This Methylorubrum extorquens (strain CM4 / NCIMB 13688) (Methylobacterium extorquens) protein is Small ribosomal subunit protein bS18.